The primary structure comprises 494 residues: Putative transporter SVOPL (494 aa).

The next 10 helical transmembrane spans lie at 48 to 68, 86 to 106, 121 to 141, 179 to 199, 203 to 223, 281 to 301, 350 to 370, 385 to 405, 431 to 451, and 460 to 480; these read IALF…IMLI, VAFV…LFGL, FLWG…IWFV, VFWL…IPTI, WLIR…KFIP, TLQI…VILA, IIST…INFL, LFFL…FLFM, AIGM…APFI, and FLGA…SAFT.

It belongs to the major facilitator superfamily.

It localises to the membrane. In Mus musculus (Mouse), this protein is Putative transporter SVOPL (Svopl).